A 273-amino-acid polypeptide reads, in one-letter code: 4-hydroxy-tetrahydrodipicolinate reductase (273 aa).

NAD(+) is bound by residues 12 to 17 (GAGGRM) and E38. R39 provides a ligand contact to NADP(+). Residues 102–104 (GTT) and 126–129 (AANF) contribute to the NAD(+) site. The active-site Proton donor/acceptor is the H159. H160 serves as a coordination point for (S)-2,3,4,5-tetrahydrodipicolinate. Catalysis depends on K163, which acts as the Proton donor. (S)-2,3,4,5-tetrahydrodipicolinate is bound at residue 169 to 170 (GT).

The protein belongs to the DapB family. Homotetramer.

The protein resides in the cytoplasm. The enzyme catalyses (S)-2,3,4,5-tetrahydrodipicolinate + NAD(+) + H2O = (2S,4S)-4-hydroxy-2,3,4,5-tetrahydrodipicolinate + NADH + H(+). It carries out the reaction (S)-2,3,4,5-tetrahydrodipicolinate + NADP(+) + H2O = (2S,4S)-4-hydroxy-2,3,4,5-tetrahydrodipicolinate + NADPH + H(+). It participates in amino-acid biosynthesis; L-lysine biosynthesis via DAP pathway; (S)-tetrahydrodipicolinate from L-aspartate: step 4/4. Its function is as follows. Catalyzes the conversion of 4-hydroxy-tetrahydrodipicolinate (HTPA) to tetrahydrodipicolinate. The protein is 4-hydroxy-tetrahydrodipicolinate reductase of Salmonella agona (strain SL483).